Here is a 105-residue protein sequence, read N- to C-terminus: MAEWSGEYISPYAEHGKKSEQVKKITVSIPLKVLKILTDERTRRQVNNLRHATNSELLCEAFLHAFTGQPLPDDADLRKERSDEIPEAAKEIMREMGIDPETWEY.

The protein belongs to the MetJ family. In terms of assembly, homodimer.

The protein localises to the cytoplasm. Functionally, this regulatory protein, when combined with SAM (S-adenosylmethionine) represses the expression of the methionine regulon and of enzymes involved in SAM synthesis. The polypeptide is Met repressor (Salmonella dublin (strain CT_02021853)).